The chain runs to 445 residues: Enolase (445 aa).

Substrate-binding residues include His-165 and Glu-174. Glu-217 (proton donor) is an active-site residue. The Mg(2+) site is built by Asp-252, Glu-303, and Asp-330. Substrate is bound by residues Glu-303 and Asp-330. Catalysis depends on Lys-355, which acts as the Proton acceptor. Residues 382 to 385 and Lys-406 each bind substrate; that span reads SHRS.

This sequence belongs to the enolase family. Homodimer. Mg(2+) serves as cofactor.

The protein localises to the cytoplasm. It catalyses the reaction (2R)-2-phosphoglycerate = phosphoenolpyruvate + H2O. The protein operates within carbohydrate degradation; glycolysis; pyruvate from D-glyceraldehyde 3-phosphate: step 4/5. This chain is Enolase (ENO), found in Eimeria tenella (Coccidian parasite).